Consider the following 119-residue polypeptide: Flagellar transcriptional regulator FlhD (119 aa).

Belongs to the FlhD family. In terms of assembly, homodimer; disulfide-linked. Forms a heterohexamer composed of two FlhC and four FlhD subunits. Each FlhC binds a FlhD dimer, forming a heterotrimer, and a hexamer assembles by dimerization of two heterotrimers.

Its subcellular location is the cytoplasm. Functionally, functions in complex with FlhC as a master transcriptional regulator that regulates transcription of several flagellar and non-flagellar operons by binding to their promoter region. Activates expression of class 2 flagellar genes, including fliA, which is a flagellum-specific sigma factor that turns on the class 3 genes. Also regulates genes whose products function in a variety of physiological pathways. The protein is Flagellar transcriptional regulator FlhD of Pectobacterium atrosepticum (strain SCRI 1043 / ATCC BAA-672) (Erwinia carotovora subsp. atroseptica).